Consider the following 267-residue polypeptide: Tryptophan synthase alpha chain (267 aa).

Catalysis depends on proton acceptor residues E43 and D54.

This sequence belongs to the TrpA family. In terms of assembly, tetramer of two alpha and two beta chains.

It carries out the reaction (1S,2R)-1-C-(indol-3-yl)glycerol 3-phosphate + L-serine = D-glyceraldehyde 3-phosphate + L-tryptophan + H2O. Its pathway is amino-acid biosynthesis; L-tryptophan biosynthesis; L-tryptophan from chorismate: step 5/5. Its function is as follows. The alpha subunit is responsible for the aldol cleavage of indoleglycerol phosphate to indole and glyceraldehyde 3-phosphate. This is Tryptophan synthase alpha chain from Bacillus licheniformis (strain ATCC 14580 / DSM 13 / JCM 2505 / CCUG 7422 / NBRC 12200 / NCIMB 9375 / NCTC 10341 / NRRL NRS-1264 / Gibson 46).